The sequence spans 331 residues: Probable endo-beta-1,4-glucanase B (331 aa).

Residues 1-18 (MKFQSTLLLAAAAGSALA) form the signal peptide. N38 and N100 each carry an N-linked (GlcNAc...) asparagine glycan. Catalysis depends on E160, which acts as the Proton donor. N211 carries an N-linked (GlcNAc...) asparagine glycan. E266 (nucleophile) is an active-site residue. N288 is a glycosylation site (N-linked (GlcNAc...) asparagine).

This sequence belongs to the glycosyl hydrolase 5 (cellulase A) family.

The protein resides in the secreted. The enzyme catalyses Endohydrolysis of (1-&gt;4)-beta-D-glucosidic linkages in cellulose, lichenin and cereal beta-D-glucans.. Functionally, has endoglucanase activity on substrates containing beta-1,4 glycosidic bonds, like in carboxymethylcellulose (CMC), hydroxyethylcellulose (HEC) and beta-glucan. Involved in the degradation of complex natural cellulosic substrates. The chain is Probable endo-beta-1,4-glucanase B (eglB) from Aspergillus niger (strain ATCC MYA-4892 / CBS 513.88 / FGSC A1513).